A 125-amino-acid chain; its full sequence is uncharacterized protein (125 aa).

Residues 96–113 (LFMMSIVSSYVCYITVLL) form a helical membrane-spanning segment.

The protein localises to the membrane. This is an uncharacterized protein from Saccharomyces cerevisiae (strain ATCC 204508 / S288c) (Baker's yeast).